The following is a 507-amino-acid chain: Histidine ammonia-lyase (507 aa).

Residues 141 to 143 (ASG) constitute a cross-link (5-imidazolinone (Ala-Gly)). Position 142 is a 2,3-didehydroalanine (Ser) (serine 142).

This sequence belongs to the PAL/histidase family. In terms of processing, contains an active site 4-methylidene-imidazol-5-one (MIO), which is formed autocatalytically by cyclization and dehydration of residues Ala-Ser-Gly.

The protein resides in the cytoplasm. It catalyses the reaction L-histidine = trans-urocanate + NH4(+). It functions in the pathway amino-acid degradation; L-histidine degradation into L-glutamate; N-formimidoyl-L-glutamate from L-histidine: step 1/3. The chain is Histidine ammonia-lyase from Burkholderia vietnamiensis (strain G4 / LMG 22486) (Burkholderia cepacia (strain R1808)).